Here is a 353-residue protein sequence, read N- to C-terminus: Photosystem II protein D1 (353 aa).

N-acetylthreonine is present on threonine 2. Threonine 2 is modified (phosphothreonine). 3 consecutive transmembrane segments (helical) span residues 29 to 46, 118 to 133, and 142 to 156; these read YIGWFGVIMIPTLLTATS, HFFLGICCYMGREWEL, and WIAVAYSAPVAAATA. A chlorophyll a-binding site is contributed by histidine 118. Tyrosine 126 serves as a coordination point for pheophytin a. Residues aspartate 170 and glutamate 189 each contribute to the [CaMn4O5] cluster site. The chain crosses the membrane as a helical span at residues 197 to 218; it reads FHMLGVAGVFGGSLFSAMHGSL. A chlorophyll a-binding site is contributed by histidine 198. Residues histidine 215 and 264 to 265 each bind a quinone; that span reads SF. Position 215 (histidine 215) interacts with Fe cation. Fe cation is bound at residue histidine 272. A helical transmembrane segment spans residues 274-288; it reads FLAAWPVVGIWFTAL. Residues histidine 332, glutamate 333, aspartate 342, and alanine 344 each coordinate [CaMn4O5] cluster. A propeptide spanning residues 345-353 is cleaved from the precursor; sequence SVEAPSVNA.

The protein belongs to the reaction center PufL/M/PsbA/D family. PSII is composed of 1 copy each of membrane proteins PsbA, PsbB, PsbC, PsbD, PsbE, PsbF, PsbH, PsbI, PsbJ, PsbK, PsbL, PsbM, PsbT, PsbX, PsbY, PsbZ, Psb30/Ycf12, at least 3 peripheral proteins of the oxygen-evolving complex and a large number of cofactors. It forms dimeric complexes. The cofactor is The D1/D2 heterodimer binds P680, chlorophylls that are the primary electron donor of PSII, and subsequent electron acceptors. It shares a non-heme iron and each subunit binds pheophytin, quinone, additional chlorophylls, carotenoids and lipids. D1 provides most of the ligands for the Mn4-Ca-O5 cluster of the oxygen-evolving complex (OEC). There is also a Cl(-1) ion associated with D1 and D2, which is required for oxygen evolution. The PSII complex binds additional chlorophylls, carotenoids and specific lipids.. Post-translationally, the 9 C-terminal residues are removed, probably by CTPA (AC O04073); processing is essential to allow assembly of the oxygen-evolving complex and thus photosynthetic growth. In terms of processing, tyr-161 forms a radical intermediate that is referred to as redox-active TyrZ, YZ or Y-Z.

The protein localises to the plastid. It is found in the chloroplast thylakoid membrane. It carries out the reaction 2 a plastoquinone + 4 hnu + 2 H2O = 2 a plastoquinol + O2. In terms of biological role, photosystem II (PSII) is a light-driven water:plastoquinone oxidoreductase that uses light energy to abstract electrons from H(2)O, generating O(2) and a proton gradient subsequently used for ATP formation. It consists of a core antenna complex that captures photons, and an electron transfer chain that converts photonic excitation into a charge separation. The D1/D2 (PsbA/PsbD) reaction center heterodimer binds P680, the primary electron donor of PSII as well as several subsequent electron acceptors. This is Photosystem II protein D1 from Tetradesmus obliquus (Green alga).